A 153-amino-acid chain; its full sequence is ATP synthase subunit b' (153 aa).

A helical membrane pass occupies residues 23 to 40; sequence LMAIQVVALTYILNSLFF.

Belongs to the ATPase B chain family. As to quaternary structure, F-type ATPases have 2 components, F(1) - the catalytic core - and F(0) - the membrane proton channel. F(1) has five subunits: alpha(3), beta(3), gamma(1), delta(1), epsilon(1). F(0) has four main subunits: a(1), b(1), b'(1) and c(10-14). The alpha and beta chains form an alternating ring which encloses part of the gamma chain. F(1) is attached to F(0) by a central stalk formed by the gamma and epsilon chains, while a peripheral stalk is formed by the delta, b and b' chains.

The protein localises to the cellular thylakoid membrane. In terms of biological role, f(1)F(0) ATP synthase produces ATP from ADP in the presence of a proton or sodium gradient. F-type ATPases consist of two structural domains, F(1) containing the extramembraneous catalytic core and F(0) containing the membrane proton channel, linked together by a central stalk and a peripheral stalk. During catalysis, ATP synthesis in the catalytic domain of F(1) is coupled via a rotary mechanism of the central stalk subunits to proton translocation. Functionally, component of the F(0) channel, it forms part of the peripheral stalk, linking F(1) to F(0). The b'-subunit is a diverged and duplicated form of b found in plants and photosynthetic bacteria. This chain is ATP synthase subunit b', found in Prochlorococcus marinus (strain MIT 9312).